The sequence spans 59 residues: Conotoxin ViVB (59 aa).

A signal peptide spans 1 to 22; it reads MRCVPVFIILLLLIPSAPSAAV. Residues 23–46 constitute a propeptide that is removed on maturation; it reads QPKTEKDDVPLASFHDSAMRILSR. Glutamine 47 is modified (pyrrolidone carboxylic acid). Position 58 is a valine amide (valine 58).

Contains 2 disulfide bonds that can be either 'C1-C3, C2-C4' or 'C1-C4, C2-C3', since these disulfide connectivities have been observed for conotoxins with cysteine framework V (for examples, see AC P0DQQ7 and AC P81755). As to expression, expressed by the venom duct.

Its subcellular location is the secreted. In Conus virgo (Virgin cone), this protein is Conotoxin ViVB.